A 444-amino-acid chain; its full sequence is Argininosuccinate synthase (444 aa).

ATP is bound by residues 18–26 and Ala-44; that span reads AFSGGLDTS. Tyr-100 serves as a coordination point for L-citrulline. Positions 130 and 132 each coordinate ATP. Thr-132, Asn-136, and Asp-137 together coordinate L-aspartate. Asn-136 serves as a coordination point for L-citrulline. Asp-137 provides a ligand contact to ATP. The L-citrulline site is built by Arg-140 and Ser-193. Asp-195 provides a ligand contact to ATP. 3 residues coordinate L-citrulline: Thr-202, Glu-204, and Glu-281.

This sequence belongs to the argininosuccinate synthase family. Type 2 subfamily. In terms of assembly, homotetramer.

The protein resides in the cytoplasm. It catalyses the reaction L-citrulline + L-aspartate + ATP = 2-(N(omega)-L-arginino)succinate + AMP + diphosphate + H(+). The protein operates within amino-acid biosynthesis; L-arginine biosynthesis; L-arginine from L-ornithine and carbamoyl phosphate: step 2/3. This is Argininosuccinate synthase from Histophilus somni (strain 129Pt) (Haemophilus somnus).